We begin with the raw amino-acid sequence, 374 residues long: Speckle-type POZ protein A (374 aa).

One can recognise an MATH domain in the interval 31–161 (KFSYMWTINN…DDKLTLFCEV (131 aa)). The required for nuclear localization stretch occupies residues 71–191 (VNPKGLDEES…PECRLADELG (121 aa)). One can recognise a BTB domain in the interval 173-297 (QNTMNMVKVP…MCEEALCSNL (125 aa)). The segment at 297 to 355 (LSVENAAEILILADLHSADQLKTQAVDFINYHASDVMETSGWKSMVVSHPHLVAEAYRS) is homodimerization.

Belongs to the Tdpoz family. As to quaternary structure, homodimer. Part of cullin-RING-based BCR (BTB-CUL3-RBX1) E3 ubiquitin-protein ligase complexes that contain CUL3 and SPOP, plus a target protein.

It localises to the nucleus. The protein localises to the nucleus speckle. The protein operates within protein modification; protein ubiquitination. In terms of biological role, component of a cullin-RING-based BCR (BTB-CUL3-RBX1) E3 ubiquitin-protein ligase complex that mediates the ubiquitination of target proteins, leading most often to their proteasomal degradation. This Xenopus laevis (African clawed frog) protein is Speckle-type POZ protein A (spop-a).